Consider the following 287-residue polypeptide: ATP synthase gamma chain (287 aa).

Belongs to the ATPase gamma chain family. In terms of assembly, F-type ATPases have 2 components, CF(1) - the catalytic core - and CF(0) - the membrane proton channel. CF(1) has five subunits: alpha(3), beta(3), gamma(1), delta(1), epsilon(1). CF(0) has three main subunits: a, b and c.

It is found in the cell inner membrane. In terms of biological role, produces ATP from ADP in the presence of a proton gradient across the membrane. The gamma chain is believed to be important in regulating ATPase activity and the flow of protons through the CF(0) complex. The chain is ATP synthase gamma chain from Serratia proteamaculans (strain 568).